A 263-amino-acid chain; its full sequence is HTH-type transcriptional repressor NanR (263 aa).

A disordered region spans residues 1-25 (MDVMNAFDSQAEDSPTSLGRSLRRR). The HTH gntR-type domain occupies 30–98 (KKLSEMVEEE…NGERARVSRP (69 aa)). Residues 58 to 77 (ERELMAFFNVGRPSVREALA) constitute a DNA-binding region (H-T-H motif).

This sequence belongs to the NanR family.

Transcriptional repressor that controls expression of the genes required for the catabolism of sialic acids. This is HTH-type transcriptional repressor NanR from Salmonella choleraesuis (strain SC-B67).